The following is an 874-amino-acid chain: MSIQSIVTKETLKKKDTNIEIQEKNMNDLVESASRVIAPLWPISTFAAHHPWMGLEKQSFEQVANWLKEARNVDIYPSASMIHSAKAKGEIEESFLQIGLSRWLDSQSFHIPRETAERFCQEALKLERLPSSLLSSPELNKLAEEISYINTGSMEDSSMQPISSLIENQKGDNLSDVLNYHIIKWCKLYLDDSGSSWTMPNREKGLYRAWHHLITFDPALSKNERKVLKDWPQDAQGALTKALSELGIPESNRQAYLEGHLLSLPGWAGMIRWRSQQSIKEQALVIEYLAVRISMELAIVKPYLPLKNQKAEKKVSIVPLIASWIYWGDISTREWLQMSATEQSELLAFAYRFDENTRKKLWLEAWEQTHAEQLKKKISSKQRATNDKKRVVAQLAFCIDVRSEPFRRHLEKLGPFETFGIAGFFGLPIATSELGSNNSHPSLPVILKPKHQIKELADENEYKSYEQRKKIDSSVSYTFKTMKKNVLTSMLLPEVSGPLLGLQMITRSFVPRRVGGFIRNLRKNMLQKPNTTFSLNHVHDTKCEIPIGFTKEEKVNYVRQALKMVGLTEKFAPLVVMCGHSSQSTNNPYAAALECGACGGAAGGFNARVFATLCNLPEVREALSAEGIKIPEDTIFAAAEHKTTVDELDWIYVPELSEAAQEAFDNIESVMPNVSQEANRERLTQLPNFKMKIKNPSKEAHRFAEDWSEIRPEWGLARNASFIIGQRELTQDCDLEGRAFLHNYDWKQDENGDILASIIAGPGTVAQWINLQYYASTVAPHYYGSGNKTTQTVTAGLGVMQGNASDLLSGLPWQSVMQSDSETYHSPLRLLIVIQAPTKYIERLLNNDFTFREKVQNGWVRLASVDSEGRWKNW.

Zn(2+)-binding residues include Cys398, Asp400, His580, and Cys595.

The protein belongs to the inorganic carbon transporter (TC 9.A.2) DabA family. In terms of assembly, forms a complex with DabB. It depends on Zn(2+) as a cofactor.

It localises to the cell membrane. Its function is as follows. Part of an energy-coupled inorganic carbon pump. The protein is Probable inorganic carbon transporter subunit DabA of Bacillus cereus (strain AH187).